The chain runs to 266 residues: Ribosomal RNA small subunit methyltransferase A (266 aa).

S-adenosyl-L-methionine contacts are provided by Asn-10, Ile-12, Gly-37, Glu-58, Asp-82, and Asn-105.

This sequence belongs to the class I-like SAM-binding methyltransferase superfamily. rRNA adenine N(6)-methyltransferase family. RsmA subfamily.

The protein resides in the cytoplasm. It catalyses the reaction adenosine(1518)/adenosine(1519) in 16S rRNA + 4 S-adenosyl-L-methionine = N(6)-dimethyladenosine(1518)/N(6)-dimethyladenosine(1519) in 16S rRNA + 4 S-adenosyl-L-homocysteine + 4 H(+). Its function is as follows. Specifically dimethylates two adjacent adenosines (A1518 and A1519) in the loop of a conserved hairpin near the 3'-end of 16S rRNA in the 30S particle. May play a critical role in biogenesis of 30S subunits. The sequence is that of Ribosomal RNA small subunit methyltransferase A from Mycoplasma capricolum subsp. capricolum (strain California kid / ATCC 27343 / NCTC 10154).